The primary structure comprises 94 residues: Integration host factor subunit beta (94 aa).

It belongs to the bacterial histone-like protein family. As to quaternary structure, heterodimer of an alpha and a beta chain.

Functionally, this protein is one of the two subunits of integration host factor, a specific DNA-binding protein that functions in genetic recombination as well as in transcriptional and translational control. This chain is Integration host factor subunit beta, found in Escherichia coli (strain UTI89 / UPEC).